A 285-amino-acid polypeptide reads, in one-letter code: Phosphatidylserine decarboxylase proenzyme (285 aa).

Catalysis depends on charge relay system; for autoendoproteolytic cleavage activity residues Asp89, His146, and Ser252. Ser252 (schiff-base intermediate with substrate; via pyruvic acid; for decarboxylase activity) is an active-site residue. At Ser252 the chain carries Pyruvic acid (Ser); by autocatalysis.

The protein belongs to the phosphatidylserine decarboxylase family. PSD-B subfamily. Prokaryotic type I sub-subfamily. Heterodimer of a large membrane-associated beta subunit and a small pyruvoyl-containing alpha subunit. Pyruvate is required as a cofactor. Is synthesized initially as an inactive proenzyme. Formation of the active enzyme involves a self-maturation process in which the active site pyruvoyl group is generated from an internal serine residue via an autocatalytic post-translational modification. Two non-identical subunits are generated from the proenzyme in this reaction, and the pyruvate is formed at the N-terminus of the alpha chain, which is derived from the carboxyl end of the proenzyme. The autoendoproteolytic cleavage occurs by a canonical serine protease mechanism, in which the side chain hydroxyl group of the serine supplies its oxygen atom to form the C-terminus of the beta chain, while the remainder of the serine residue undergoes an oxidative deamination to produce ammonia and the pyruvoyl prosthetic group on the alpha chain. During this reaction, the Ser that is part of the protease active site of the proenzyme becomes the pyruvoyl prosthetic group, which constitutes an essential element of the active site of the mature decarboxylase.

It localises to the cell membrane. The catalysed reaction is a 1,2-diacyl-sn-glycero-3-phospho-L-serine + H(+) = a 1,2-diacyl-sn-glycero-3-phosphoethanolamine + CO2. It participates in phospholipid metabolism; phosphatidylethanolamine biosynthesis; phosphatidylethanolamine from CDP-diacylglycerol: step 2/2. Catalyzes the formation of phosphatidylethanolamine (PtdEtn) from phosphatidylserine (PtdSer). The polypeptide is Phosphatidylserine decarboxylase proenzyme (Vibrio vulnificus (strain CMCP6)).